Consider the following 97-residue polypeptide: Carboxysome shell protein CsoS1B (97 aa).

Residues 8-93 (ALGMIETRGL…PHKEVEPVLT (86 aa)) form the BMC domain.

It belongs to the bacterial microcompartments protein family. CsoS1 subfamily. In terms of assembly, homohexamer with a small central pore.

The protein resides in the carboxysome. In terms of biological role, one of shell proteins of the carboxysome, a polyhedral inclusion where RuBisCO (ribulose bisphosphate carboxylase, ccbL-ccbS) is sequestered. Assembles into hexamers which make sheets that form the facets of the polyhedral carboxysome. The shell probably limits the diffusion of CO(2) into and out of the carboxysome. The sequence is that of Carboxysome shell protein CsoS1B from Hydrogenovibrio crunogenus (strain DSM 25203 / XCL-2) (Thiomicrospira crunogena).